The chain runs to 325 residues: Elongation factor P--(R)-beta-lysine ligase (325 aa).

Position 76–78 (76–78) interacts with substrate; it reads SPE. Residues 100 to 102 and Asn-109 each bind ATP; that span reads RNE. Substrate is bound at residue Tyr-118. 244 to 245 contributes to the ATP binding site; the sequence is EL. Glu-251 contacts substrate. Gly-300 contacts ATP.

This sequence belongs to the class-II aminoacyl-tRNA synthetase family. EpmA subfamily. As to quaternary structure, homodimer.

The enzyme catalyses D-beta-lysine + L-lysyl-[protein] + ATP = N(6)-((3R)-3,6-diaminohexanoyl)-L-lysyl-[protein] + AMP + diphosphate + H(+). With EpmB is involved in the beta-lysylation step of the post-translational modification of translation elongation factor P (EF-P) on 'Lys-34'. Catalyzes the ATP-dependent activation of (R)-beta-lysine produced by EpmB, forming a lysyl-adenylate, from which the beta-lysyl moiety is then transferred to the epsilon-amino group of EF-P 'Lys-34'. This Salmonella arizonae (strain ATCC BAA-731 / CDC346-86 / RSK2980) protein is Elongation factor P--(R)-beta-lysine ligase.